We begin with the raw amino-acid sequence, 114 residues long: MSVPTQITFFEFLTPLVASGQKTITIRDKSESHYVPGTRVEVFTLETQRKVCEIDILAVEPLKFDEINEFHAEQEAIELPKLKALIQEIYPNIDELYVITYQLAKSSSARIMVK.

The ASCH domain occupies 8-93 (TFFEFLTPLV…ALIQEIYPNI (86 aa)). Catalysis depends on K22, which acts as the Proton acceptor. T25 functions as the Nucleophile in the catalytic mechanism. Residue E75 is the Proton donor of the active site.

Belongs to the N(4)-acetylcytidine amidohydrolase family.

The catalysed reaction is N(4)-acetylcytidine + H2O = cytidine + acetate + H(+). The enzyme catalyses N(4)-acetyl-2'-deoxycytidine + H2O = 2'-deoxycytidine + acetate + H(+). It carries out the reaction N(4)-acetylcytosine + H2O = cytosine + acetate + H(+). Catalyzes the hydrolysis of N(4)-acetylcytidine (ac4C). This is N(4)-acetylcytidine amidohydrolase from Vibrio cholerae serotype O1 (strain ATCC 39541 / Classical Ogawa 395 / O395).